Consider the following 784-residue polypeptide: Homoaconitase, mitochondrial (784 aa).

The N-terminal 32 residues, 1-32 (MIHPVRRALAVAASRAPRQFLAAASRTTSVRS), are a transit peptide targeting the mitochondrion. Residues C399, C468, and C471 each coordinate [4Fe-4S] cluster. Positions 572-596 (EAGLTPESTSSSSSSSSSSEEESLT) are disordered. The span at 578–589 (ESTSSSSSSSSS) shows a compositional bias: low complexity.

It belongs to the aconitase/IPM isomerase family. Requires [4Fe-4S] cluster as cofactor.

It localises to the mitochondrion. The catalysed reaction is (2R,3S)-homoisocitrate = cis-homoaconitate + H2O. It participates in amino-acid biosynthesis; L-lysine biosynthesis via AAA pathway; L-alpha-aminoadipate from 2-oxoglutarate: step 3/5. Catalyzes the reversible hydration of cis-homoaconitate to (2R,3S)-homoisocitrate, a step in the alpha-aminoadipate pathway for lysine biosynthesis. In Neurospora crassa (strain ATCC 24698 / 74-OR23-1A / CBS 708.71 / DSM 1257 / FGSC 987), this protein is Homoaconitase, mitochondrial (lys-4).